The chain runs to 130 residues: RxLR effector protein PITG_14783 (130 aa).

A signal peptide spans 1–20 (MRLPYVFAATMATLLVSSNA). Residues 27-58 (AMLSSPNEQHQRQLRSHQTPVEDQEPDEERSL) are disordered. Residues 38–56 (RQLRSHQTPVEDQEPDEER) carry the RxLR-dEER motif.

This sequence belongs to the RxLR effector family.

Its subcellular location is the secreted. The protein localises to the host nucleus. The protein resides in the host cytoplasm. In terms of biological role, effector that enhances P.infestans colonization of Nicotiana benthamiana leaves. The sequence is that of RxLR effector protein PITG_14783 from Phytophthora infestans (strain T30-4) (Potato late blight agent).